A 38-amino-acid polypeptide reads, in one-letter code: Photosystem I reaction center subunit IX (38 aa).

A helical transmembrane segment spans residues 4–24 (FLTAAPVVAAIWFTATAGILI).

It belongs to the PsaJ family.

The protein resides in the cellular thylakoid membrane. May help in the organization of the PsaE and PsaF subunits. This chain is Photosystem I reaction center subunit IX, found in Synechococcus sp. (strain CC9605).